Consider the following 24-residue polypeptide: 33.0 kDa cold shock protein (24 aa).

Belongs to the thaumatin family. In terms of assembly, homooligomer; disulfide-linked. Glycosylated.

It localises to the secreted. It is found in the extracellular space. The protein localises to the apoplast. This chain is 33.0 kDa cold shock protein, found in Arachis hypogaea (Peanut).